Consider the following 136-residue polypeptide: Large-conductance mechanosensitive channel (136 aa).

2 helical membrane-spanning segments follow: residues 9 to 29 (AFASRGNVIDMAVGIIIGAAF) and 79 to 99 (IQTVIDFTIIAFAIFMGLKAI).

It belongs to the MscL family. As to quaternary structure, homopentamer.

It localises to the cell inner membrane. In terms of biological role, channel that opens in response to stretch forces in the membrane lipid bilayer. May participate in the regulation of osmotic pressure changes within the cell. In Shewanella putrefaciens (strain CN-32 / ATCC BAA-453), this protein is Large-conductance mechanosensitive channel.